The sequence spans 35 residues: Photosystem II reaction center protein T (35 aa).

A helical transmembrane segment spans residues 3 to 23 (ALVYTFLLVSTLGIIFFAIFF).

This sequence belongs to the PsbT family. In terms of assembly, PSII is composed of 1 copy each of membrane proteins PsbA, PsbB, PsbC, PsbD, PsbE, PsbF, PsbH, PsbI, PsbJ, PsbK, PsbL, PsbM, PsbT, PsbY, PsbZ, Psb30/Ycf12, at least 3 peripheral proteins of the oxygen-evolving complex and a large number of cofactors. It forms dimeric complexes.

The protein resides in the plastid. The protein localises to the chloroplast thylakoid membrane. Found at the monomer-monomer interface of the photosystem II (PS II) dimer, plays a role in assembly and dimerization of PSII. PSII is a light-driven water plastoquinone oxidoreductase, using light energy to abstract electrons from H(2)O, generating a proton gradient subsequently used for ATP formation. The protein is Photosystem II reaction center protein T of Gunnera chilensis (Chilean rhubarb).